A 586-amino-acid chain; its full sequence is Heterogeneous nuclear ribonucleoprotein L (586 aa).

Over residues 1–16 (MSRRLLPRAEKRRRRL) the composition is skewed to basic residues. The segment at 1–97 (MSRRLLPRAE…NYDDPHKTPA (97 aa)) is disordered. Residues 17–27 (EQRQQPDEQLR) are compositionally biased toward basic and acidic residues. The segment covering 28 to 37 (RAGAMVKMAA) has biased composition (low complexity). A compositionally biased stretch (gly residues) spans 38–54 (AGGGGGGGRYYGGGNEG). Residues Lys59 and Lys62 each participate in a glycyl lysine isopeptide (Lys-Gly) (interchain with G-Cter in SUMO2) cross-link. The segment covering 69–87 (QHGGGGGGGSGAAGGGGGE) has biased composition (gly residues). Residue Ser98 is modified to Phosphoserine. The RRM 1 domain occupies 99-173 (PVVHIRGLID…HPAFVNYSTS (75 aa)). Lys133 is covalently cross-linked (Glycyl lysine isopeptide (Lys-Gly) (interchain with G-Cter in SUMO2)). Position 182 is a phosphoserine (Ser182). The region spanning 190–267 (SVLLFTILNP…CTLKIEYAKP (78 aa)) is the RRM 2 domain. The residue at position 266 (Lys266) is an N6-acetyllysine. The segment covering 281 to 298 (DYTNPNLSGQGDPGSNPN) has biased composition (polar residues). A disordered region spans residues 281–376 (DYTNPNLSGQ…PPPPDYGPHA (96 aa)). A phosphoserine mark is found at Ser288 and Ser295. Lys299 is covalently cross-linked (Glycyl lysine isopeptide (Lys-Gly) (interchain with G-Cter in SUMO2)). 2 positions are modified to asymmetric dimethylarginine: Arg351 and Arg355. Residues 361-372 (GHPPPPPPPPDY) are compositionally biased toward pro residues. Ser378 carries the phosphoserine modification. 2 consecutive RRM domains span residues 379 to 476 (PVLM…DFSE) and 492 to 580 (RIQH…LCFS). Residue Ser541 is modified to Phosphoserine; by CaMK4. Lys565 participates in a covalent cross-link: Glycyl lysine isopeptide (Lys-Gly) (interchain with G-Cter in SUMO2).

Identified in a IGF2BP1-dependent mRNP granule complex containing untranslated mRNAs. Interacts with HNRNPLL. Interacts with APEX1; the interaction is DNA-dependent. Component of a complex with SETD2. Interacts with ELAVL1. Part of a transcription inhibitory ribonucleoprotein complex composed at least of the circular RNA circZNF827, ZNF827 and HNRNPK. Interacts with CHD8 in an RNA-dependent manner. Post-translationally, phosphorylation at Ser-541 by CaMK4 enhances interaction with a CaMK4-responsive RNA element (CaRRE1), and prevents inclusion of the stress axis-regulated exon (STREX) of the KCNMA1 potassium channel transcripts upon membrane depolarization. Detected in hematopoietic cells, including lymphoid progenitor cells.

The protein resides in the nucleus. The protein localises to the nucleoplasm. Its subcellular location is the cytoplasm. Splicing factor binding to exonic or intronic sites and acting as either an activator or repressor of exon inclusion. Exhibits a binding preference for CA-rich elements. Component of the heterogeneous nuclear ribonucleoprotein (hnRNP) complexes and associated with most nascent transcripts. Associates, together with APEX1, to the negative calcium responsive element (nCaRE) B2 of the APEX2 promoter. As part of a ribonucleoprotein complex composed at least of ZNF827, HNRNPK and the circular RNA circZNF827 that nucleates the complex on chromatin, may negatively regulate the transcription of genes involved in neuronal differentiation. Regulates alternative splicing of a core group of genes involved in neuronal differentiation, likely by mediating H3K36me3-coupled transcription elongation and co-transcriptional RNA processing via interaction with CHD8. The polypeptide is Heterogeneous nuclear ribonucleoprotein L (Hnrnpl) (Mus musculus (Mouse)).